The sequence spans 96 residues: Acylphosphatase (96 aa).

One can recognise an Acylphosphatase-like domain in the interval 4–96 (RCEFLIFGKV…ESLNDFEILR (93 aa)). Residues Arg19 and Asn42 contribute to the active site.

This sequence belongs to the acylphosphatase family.

It catalyses the reaction an acyl phosphate + H2O = a carboxylate + phosphate + H(+). The protein is Acylphosphatase (acyP) of Helicobacter hepaticus (strain ATCC 51449 / 3B1).